A 318-amino-acid chain; its full sequence is Probable RNA methyltransferase At5g51130 (318 aa).

Disordered stretches follow at residues 1 to 61 (MGRD…NQEV) and 146 to 184 (NSTK…DSAE). A compositionally biased stretch (basic and acidic residues) spans 16–34 (RSNENEKSVEKVVANEEKV). Low complexity predominate over residues 37-52 (QQKQKQQQGQQGNCNQ). A Bin3-type SAM domain is found at 82–318 (DPRLKVLKKE…FDRQILAFQK (237 aa)).

Belongs to the methyltransferase superfamily.

Its function is as follows. Probable RNA methyltransferase. This chain is Probable RNA methyltransferase At5g51130, found in Arabidopsis thaliana (Mouse-ear cress).